Reading from the N-terminus, the 260-residue chain is Ubiquinone/menaquinone biosynthesis C-methyltransferase UbiE (260 aa).

Residues Thr83, Asp104, 132–133, and Ser149 each bind S-adenosyl-L-methionine; that span reads NA.

Belongs to the class I-like SAM-binding methyltransferase superfamily. MenG/UbiE family.

It catalyses the reaction a 2-demethylmenaquinol + S-adenosyl-L-methionine = a menaquinol + S-adenosyl-L-homocysteine + H(+). The enzyme catalyses a 2-methoxy-6-(all-trans-polyprenyl)benzene-1,4-diol + S-adenosyl-L-methionine = a 5-methoxy-2-methyl-3-(all-trans-polyprenyl)benzene-1,4-diol + S-adenosyl-L-homocysteine + H(+). It participates in quinol/quinone metabolism; menaquinone biosynthesis; menaquinol from 1,4-dihydroxy-2-naphthoate: step 2/2. The protein operates within cofactor biosynthesis; ubiquinone biosynthesis. Methyltransferase required for the conversion of demethylmenaquinol (DMKH2) to menaquinol (MKH2) and the conversion of 2-polyprenyl-6-methoxy-1,4-benzoquinol (DDMQH2) to 2-polyprenyl-3-methyl-6-methoxy-1,4-benzoquinol (DMQH2). The sequence is that of Ubiquinone/menaquinone biosynthesis C-methyltransferase UbiE from Vibrio vulnificus (strain CMCP6).